We begin with the raw amino-acid sequence, 417 residues long: Solanesyl diphosphate synthase 2, chloroplastic (417 aa).

A chloroplast-targeting transit peptide spans 1–60 (MMMSCRNIDLGTSVLDHSCSSSSTSRRFLFGNSSKTVCMIGGRSCVGNLVFLRRDLATCR). Isopentenyl diphosphate is bound by residues Lys-137, Arg-140, and His-175. Mg(2+)-binding residues include Asp-182 and Asp-186. An all-trans-polyprenyl diphosphate is bound at residue Arg-191. Arg-192 contributes to the isopentenyl diphosphate binding site. Residues Lys-268, Thr-269, Gln-306, and Lys-323 each coordinate an all-trans-polyprenyl diphosphate.

This sequence belongs to the FPP/GGPP synthase family. In terms of assembly, homodimer. Interacts with FBN5. Requires Mg(2+) as cofactor. Higher expression in leaves than in roots.

It is found in the plastid. It localises to the chloroplast. The catalysed reaction is 5 isopentenyl diphosphate + (2E,6E,10E)-geranylgeranyl diphosphate = all-trans-nonaprenyl diphosphate + 5 diphosphate. In terms of biological role, involved in providing solanesyl diphosphate for plastoquinone-9 (PQ-9) formation in plastids. Catalyzes the elongation of the prenyl side chain of PQ-9 in plastids. Contributes to the biosynthesis of plastochromanol-8 (PC-8) in plastids. Does not contribute to the synthesis of tocopherol or ubiquinone. PQ-9 and PC-8 are lipophilic antioxidants that act as protectant against photooxidative stress under high light stress conditions. Prefers geranylgeranyl diphosphate to farnesyl diphosphate as substrate. No activity with geranyl diphosphate or dimethylallyl diphosphate as substrate. This is Solanesyl diphosphate synthase 2, chloroplastic from Arabidopsis thaliana (Mouse-ear cress).